The following is a 229-amino-acid chain: Interleukin-22 receptor subunit alpha-2 (229 aa).

The signal sequence occupies residues 1-19; it reads MPKHCFLGLLIMLLTTATE. 2 consecutive Fibronectin type-III domains span residues 28–127 and 128–229; these read KPQK…TKLD and PPVV…VQIP. N54 carries an N-linked (GlcNAc...) asparagine glycan. Disulfide bonds link C76/C84 and C204/C225.

It belongs to the type II cytokine receptor family.

The protein localises to the secreted. Its function is as follows. Receptor for IL22. Binds to IL22, prevents interaction with the functional IL-22R complex and blocks the activity of IL22 (in vitro). May play an important role as an IL22 antagonist in the regulation of inflammatory responses. The protein is Interleukin-22 receptor subunit alpha-2 (Il22ra2) of Rattus norvegicus (Rat).